We begin with the raw amino-acid sequence, 263 residues long: uncharacterized protein (263 aa).

Position 31-38 (Gly31–Thr38) interacts with ATP.

Belongs to the CbbQ/NirQ/NorQ/GpvN family.

This is an uncharacterized protein from Staphylococcus epidermidis (strain ATCC 35984 / DSM 28319 / BCRC 17069 / CCUG 31568 / BM 3577 / RP62A).